The primary structure comprises 201 residues: Large ribosomal subunit protein uL4 (201 aa).

The tract at residues 44–71 (RAQKTRAEVTGSGKKPWRQKGTGRARSG) is disordered.

It belongs to the universal ribosomal protein uL4 family. As to quaternary structure, part of the 50S ribosomal subunit.

Functionally, one of the primary rRNA binding proteins, this protein initially binds near the 5'-end of the 23S rRNA. It is important during the early stages of 50S assembly. It makes multiple contacts with different domains of the 23S rRNA in the assembled 50S subunit and ribosome. Its function is as follows. Forms part of the polypeptide exit tunnel. The polypeptide is Large ribosomal subunit protein uL4 (Enterobacter sp. (strain 638)).